The following is a 517-amino-acid chain: Glycerol kinase 5 (517 aa).

ATP contacts are provided by serine 23 and threonine 24. Positions 93, 270, and 271 each coordinate glycerol. ATP-binding residues include threonine 292, glycine 335, and glycine 432.

Belongs to the FGGY kinase family.

It is found in the cytoplasm. The catalysed reaction is glycerol + ATP = sn-glycerol 3-phosphate + ADP + H(+). Its pathway is polyol metabolism; glycerol degradation via glycerol kinase pathway; sn-glycerol 3-phosphate from glycerol: step 1/1. Its function is as follows. Skin-specific kinase that plays a key role in glycerol metabolism, catalyzing its phosphorylation to produce sn-glycerol 3-phosphate. Involved in skin-specific regulation of sterol regulatory element-binding protein (SREBP) processing and lipid biosynthesis. The protein is Glycerol kinase 5 (GK5) of Gallus gallus (Chicken).